The sequence spans 417 residues: Gamma-glutamyl phosphate reductase (417 aa).

The protein belongs to the gamma-glutamyl phosphate reductase family.

The protein localises to the cytoplasm. It carries out the reaction L-glutamate 5-semialdehyde + phosphate + NADP(+) = L-glutamyl 5-phosphate + NADPH + H(+). Its pathway is amino-acid biosynthesis; L-proline biosynthesis; L-glutamate 5-semialdehyde from L-glutamate: step 2/2. In terms of biological role, catalyzes the NADPH-dependent reduction of L-glutamate 5-phosphate into L-glutamate 5-semialdehyde and phosphate. The product spontaneously undergoes cyclization to form 1-pyrroline-5-carboxylate. This is Gamma-glutamyl phosphate reductase from Heliobacterium modesticaldum (strain ATCC 51547 / Ice1).